A 266-amino-acid chain; its full sequence is Phosphonates import ATP-binding protein PhnC (266 aa).

Residues 2–246 (IEIKNVSKTY…KFAEIYGRPI (245 aa)) enclose the ABC transporter domain. An ATP-binding site is contributed by 35 to 42 (GLSGAGKS).

The protein belongs to the ABC transporter superfamily. Phosphonates importer (TC 3.A.1.9.1) family. As to quaternary structure, the complex is composed of two ATP-binding proteins (PhnC), two transmembrane proteins (PhnE) and a solute-binding protein (PhnD).

The protein localises to the cell membrane. The catalysed reaction is phosphonate(out) + ATP + H2O = phosphonate(in) + ADP + phosphate + H(+). Its function is as follows. Part of the ABC transporter complex PhnCDE involved in phosphonates import. Responsible for energy coupling to the transport system. In Shouchella clausii (strain KSM-K16) (Alkalihalobacillus clausii), this protein is Phosphonates import ATP-binding protein PhnC.